Reading from the N-terminus, the 364-residue chain is 3-methyl-2-oxobutanoate hydroxymethyltransferase 1, mitochondrial (364 aa).

Residues 1–59 (MMMMMRRAFRHLARQQRRPLSHVPESAVYGGPRPQDVGAAAGAGAGAGATRRVTVTTLR) constitute a mitochondrion transit peptide. Mg(2+) contacts are provided by aspartate 94 and aspartate 133. Residues 94 to 95 (DS), aspartate 133, and lysine 163 contribute to the 3-methyl-2-oxobutanoate site. Position 165 (glutamate 165) interacts with Mg(2+). The Proton acceptor role is filled by glutamate 233.

This sequence belongs to the PanB family. Mg(2+) serves as cofactor.

It localises to the mitochondrion. It carries out the reaction 3-methyl-2-oxobutanoate + (6R)-5,10-methylene-5,6,7,8-tetrahydrofolate + H2O = 2-dehydropantoate + (6S)-5,6,7,8-tetrahydrofolate. It functions in the pathway cofactor biosynthesis; (R)-pantothenate biosynthesis; (R)-pantoate from 3-methyl-2-oxobutanoate: step 1/2. In terms of biological role, catalyzes the reversible reaction in which hydroxymethyl group from 5,10-methylenetetrahydrofolate is transferred onto alpha-ketoisovalerate to form ketopantoate. The polypeptide is 3-methyl-2-oxobutanoate hydroxymethyltransferase 1, mitochondrial (KPHMT1) (Oryza sativa subsp. japonica (Rice)).